We begin with the raw amino-acid sequence, 530 residues long: ATP synthase subunit alpha (530 aa).

169–176 (GDRQTGKT) is a binding site for ATP.

This sequence belongs to the ATPase alpha/beta chains family. In terms of assembly, F-type ATPases have 2 components, CF(1) - the catalytic core - and CF(0) - the membrane proton channel. CF(1) has five subunits: alpha(3), beta(3), gamma(1), delta(1), epsilon(1). CF(0) has three main subunits: a(1), b(2) and c(9-12). The alpha and beta chains form an alternating ring which encloses part of the gamma chain. CF(1) is attached to CF(0) by a central stalk formed by the gamma and epsilon chains, while a peripheral stalk is formed by the delta and b chains.

It localises to the cell membrane. It catalyses the reaction ATP + H2O + 4 H(+)(in) = ADP + phosphate + 5 H(+)(out). In terms of biological role, produces ATP from ADP in the presence of a proton gradient across the membrane. The alpha chain is a regulatory subunit. This Mycoplasmopsis synoviae (strain 53) (Mycoplasma synoviae) protein is ATP synthase subunit alpha.